The following is a 575-amino-acid chain: Eukaryotic translation initiation factor 3 subunit D (575 aa).

2 disordered regions span residues 36–66 and 103–177; these read PYSKGDKLGRMADWTEGKDRERGGRQQYGNR and STRT…DASV. A compositionally biased stretch (basic and acidic residues) spans 39–59; it reads KGDKLGRMADWTEGKDRERGG. The segment covering 109-144 has biased composition (gly residues); the sequence is FGRGGGTVFGRGRGQRGGQAQRGGRGTFQRVGGRGG. A compositionally biased stretch (basic and acidic residues) spans 163-174; the sequence is GWRDDKPQRNRD. Residues 302–316 are RNA gate; it reads NLDMVTVNENAADAP.

It belongs to the eIF-3 subunit D family. Component of the eukaryotic translation initiation factor 3 (eIF-3) complex.

The protein localises to the cytoplasm. Functionally, mRNA cap-binding component of the eukaryotic translation initiation factor 3 (eIF-3) complex, which is involved in protein synthesis of a specialized repertoire of mRNAs and, together with other initiation factors, stimulates binding of mRNA and methionyl-tRNAi to the 40S ribosome. The eIF-3 complex specifically targets and initiates translation of a subset of mRNAs involved in cell proliferation. In the eIF-3 complex, eif3d specifically recognizes and binds the 7-methylguanosine cap of a subset of mRNAs. This is Eukaryotic translation initiation factor 3 subunit D from Phaeosphaeria nodorum (strain SN15 / ATCC MYA-4574 / FGSC 10173) (Glume blotch fungus).